Consider the following 625-residue polypeptide: SWR1-complex protein 3 (625 aa).

Disordered stretches follow at residues 1-53, 194-234, 254-273, and 324-434; these read MPAV…EVGN, KELK…KENK, KLKE…MHDP, and NPVN…NAIK. The span at 20 to 31 shows a compositional bias: basic residues; sequence SRTRTRSRRGKR. The span at 35–53 shows a compositional bias: acidic residues; sequence DDDDDDDEESDDAYDEVGN. 2 stretches are compositionally biased toward basic and acidic residues: residues 194–214 and 221–234; these read KELK…ERKR and IAKE…KENK. Polar residues predominate over residues 261–270; that stretch reads NKQGSPSSSM. Basic and acidic residues predominate over residues 342-352; it reads KAKDVAEDHRL. Residues 353-364 show a composition bias toward polar residues; sequence NSITLVKSSKTA. 2 stretches are compositionally biased toward basic and acidic residues: residues 368–388 and 396–420; these read PEPK…EAKT and DVKK…KEDN.

Belongs to the SWC3 family. In terms of assembly, component of the SWR1 chromatin remodeling complex composed of at least ACT1, ARP4, RVB1, RVB2, ARP6, YAF9, VPS71, VPS72, SWC3, SWC4, SWC5, SWC7 and SWR1, and perhaps BDF1.

The protein localises to the nucleus. Its function is as follows. Component of the SWR1 complex which mediates the ATP-dependent exchange of histone H2A for the H2A variant HZT1 leading to transcriptional regulation of selected genes by chromatin remodeling. Involved in chromosome stability. The polypeptide is SWR1-complex protein 3 (SWC3) (Saccharomyces cerevisiae (strain ATCC 204508 / S288c) (Baker's yeast)).